A 467-amino-acid polypeptide reads, in one-letter code: Putative laccase-16 (467 aa).

Plastocyanin-like domains are found at residues 7-88 (VLGS…PKHG), 98-225 (KEIP…YTDS), and 318-451 (DFPN…KDGK). The Cu cation site is built by His22, His24, His67, and His69. The Cu cation site is built by His368, His371, His373, His430, Cys431, His432, His436, and Met441.

The protein belongs to the multicopper oxidase family. It depends on Cu cation as a cofactor.

It is found in the secreted. The protein localises to the extracellular space. The protein resides in the apoplast. The enzyme catalyses 4 hydroquinone + O2 = 4 benzosemiquinone + 2 H2O. Functionally, lignin degradation and detoxification of lignin-derived products. This is Putative laccase-16 (LAC16) from Oryza sativa subsp. japonica (Rice).